We begin with the raw amino-acid sequence, 1176 residues long: Surface-layer 125 kDa protein (1176 aa).

A signal peptide spans 1 to 30; that stretch reads MAKQNKGRKFFAASATAALVASAIVPVASA. SLH domains lie at 31 to 88, 89 to 152, and 153 to 216; these read AQLN…LEAE, GDVN…DLSE, and FADA…PKVD.

Its subcellular location is the secreted. The protein resides in the cell wall. It is found in the S-layer. Its function is as follows. The S-layer is a paracrystalline mono-layered assembly of proteins which coat the surface of bacteria. The polypeptide is Surface-layer 125 kDa protein (Lysinibacillus sphaericus (Bacillus sphaericus)).